Reading from the N-terminus, the 130-residue chain is Small ribosomal subunit protein uS9 (130 aa).

Belongs to the universal ribosomal protein uS9 family.

This is Small ribosomal subunit protein uS9 from Salmonella paratyphi A (strain AKU_12601).